The following is a 1385-amino-acid chain: DNA-directed RNA polymerase subunit beta (1385 aa).

It belongs to the RNA polymerase beta chain family. In terms of assembly, the RNAP catalytic core consists of 2 alpha, 1 beta, 1 beta' and 1 omega subunit. When a sigma factor is associated with the core the holoenzyme is formed, which can initiate transcription.

It carries out the reaction RNA(n) + a ribonucleoside 5'-triphosphate = RNA(n+1) + diphosphate. Its function is as follows. DNA-dependent RNA polymerase catalyzes the transcription of DNA into RNA using the four ribonucleoside triphosphates as substrates. This Sulfurovum sp. (strain NBC37-1) protein is DNA-directed RNA polymerase subunit beta.